Consider the following 345-residue polypeptide: Leucine-rich repeat and transmembrane domain-containing protein 1 (345 aa).

The first 27 residues, 1 to 27 (MKGELLLFSSVIVLLQVVCSCPDKCYC), serve as a signal peptide directing secretion. Positions 28-50 (QSSTNFVDCSQQGLAEIPSHLPP) constitute an LRRNT domain. Topologically, residues 28 to 288 (QSSTNFVDCS…PANLRHAIAT (261 aa)) are extracellular. LRR repeat units lie at residues 51-72 (QTRT…AFRS), 75-96 (WLMT…AFHG), 99-120 (HLQV…LFHS), 123-144 (QLRE…LGET), and 147-168 (NLTI…LLES). N-linked (GlcNAc...) asparagine glycosylation is present at asparagine 104. An N-linked (GlcNAc...) asparagine glycan is attached at asparagine 147. Residues 180-234 (NLWKCNCHLLGLKLWLEKFVYKGGLTDGIICESPDTWKGKDLLRIPHELYQPCPL) enclose the LRRCT domain. Residues 289–309 (VIITGVVCGIVCLMMLAAAIY) form a helical membrane-spanning segment. Residues 310 to 345 (GCTYAAITAQYHGGPLAQTNDPGKVEEKERFDSSPA) lie on the Cytoplasmic side of the membrane. The tract at residues 326–345 (AQTNDPGKVEEKERFDSSPA) is disordered. Over residues 332–345 (GKVEEKERFDSSPA) the composition is skewed to basic and acidic residues.

It localises to the membrane. In Homo sapiens (Human), this protein is Leucine-rich repeat and transmembrane domain-containing protein 1 (LRTM1).